Consider the following 510-residue polypeptide: ATP synthase subunit alpha (510 aa).

Position 169-176 (169-176) interacts with ATP; the sequence is GDRQTGKS.

Belongs to the ATPase alpha/beta chains family. As to quaternary structure, F-type ATPases have 2 components, CF(1) - the catalytic core - and CF(0) - the membrane proton channel. CF(1) has five subunits: alpha(3), beta(3), gamma(1), delta(1), epsilon(1). CF(0) has three main subunits: a(1), b(2) and c(9-12). The alpha and beta chains form an alternating ring which encloses part of the gamma chain. CF(1) is attached to CF(0) by a central stalk formed by the gamma and epsilon chains, while a peripheral stalk is formed by the delta and b chains.

The protein resides in the cell membrane. The catalysed reaction is ATP + H2O + 4 H(+)(in) = ADP + phosphate + 5 H(+)(out). Functionally, produces ATP from ADP in the presence of a proton gradient across the membrane. The alpha chain is a regulatory subunit. This is ATP synthase subunit alpha from Wigglesworthia glossinidia brevipalpis.